The primary structure comprises 1400 residues: DNA-directed RNA polymerase subunit beta' (1400 aa).

Residues Cys71, Cys73, Cys86, and Cys89 each contribute to the Zn(2+) site. Mg(2+)-binding residues include Asp462, Asp464, and Asp466. Zn(2+) contacts are provided by Cys820, Cys893, Cys900, and Cys903.

The protein belongs to the RNA polymerase beta' chain family. In terms of assembly, the RNAP catalytic core consists of 2 alpha, 1 beta, 1 beta' and 1 omega subunit. When a sigma factor is associated with the core the holoenzyme is formed, which can initiate transcription. The cofactor is Mg(2+). Zn(2+) is required as a cofactor.

The catalysed reaction is RNA(n) + a ribonucleoside 5'-triphosphate = RNA(n+1) + diphosphate. DNA-dependent RNA polymerase catalyzes the transcription of DNA into RNA using the four ribonucleoside triphosphates as substrates. In Methylobacterium sp. (strain 4-46), this protein is DNA-directed RNA polymerase subunit beta'.